A 202-amino-acid chain; its full sequence is Large ribosomal subunit protein bL17 (202 aa).

The span at 130–142 (AAPAATAPAPVEE) shows a compositional bias: low complexity. Residues 130-202 (AAPAATAPAP…TEESTEDDKA (73 aa)) are disordered. Acidic residues-rich tracts occupy residues 143 to 168 (APAE…EASP) and 177 to 202 (QPVE…DDKA).

The protein belongs to the bacterial ribosomal protein bL17 family. As to quaternary structure, part of the 50S ribosomal subunit. Contacts protein L32.

The protein is Large ribosomal subunit protein bL17 of Nocardioides sp. (strain ATCC BAA-499 / JS614).